A 349-amino-acid chain; its full sequence is Delta(7)-sterol 5(6)-desaturase ERG3A (349 aa).

Helical transmembrane passes span 84-104, 124-144, and 162-182; these read ITWI…YIFI, IIAA…FFLL, and LWYD…CIYW. One can recognise a Fatty acid hydroxylase domain in the interval 170–296; the sequence is PLFLLFTDFC…FTAFDRMGGT (127 aa). Residues 184–188 carry the Histidine box-1 motif; sequence HRWLH. Residues 197-201 carry the Histidine box-2 motif; that stretch reads HKLHH. The helical transmembrane segment at 227 to 247 threads the bilayer; sequence HIFPFIFPLQKMAYVALFVFV. The Histidine box-3 signature appears at 272–276; it reads HSLHH.

This sequence belongs to the sterol desaturase family.

It is found in the endoplasmic reticulum membrane. The catalysed reaction is episterol + 2 Fe(II)-[cytochrome b5] + O2 + 2 H(+) = 5-dehydroepisterol + 2 Fe(III)-[cytochrome b5] + 2 H2O. It participates in steroid metabolism; ergosterol biosynthesis. C-5 sterol desaturase; part of the third module of ergosterol biosynthesis pathway that includes the late steps of the pathway. ERG3A and ERG3BB catalyze the introduction of a C-5 double bond in the B ring to produce 5-dehydroepisterol. The third module or late pathway involves the ergosterol synthesis itself through consecutive reactions that mainly occur in the endoplasmic reticulum (ER) membrane. Firstly, the squalene synthase ERG9 catalyzes the condensation of 2 farnesyl pyrophosphate moieties to form squalene, which is the precursor of all steroids. Squalene synthase is crucial for balancing the incorporation of farnesyl diphosphate (FPP) into sterol and nonsterol isoprene synthesis. Secondly, squalene is converted into lanosterol by the consecutive action of the squalene epoxidase ERG1 and the lanosterol synthase ERG7. Then, the delta(24)-sterol C-methyltransferase ERG6 methylates lanosterol at C-24 to produce eburicol. Eburicol is the substrate of the sterol 14-alpha demethylase encoded by CYP51A, CYP51B and CYP51C, to yield 4,4,24-trimethyl ergosta-8,14,24(28)-trienol. CYP51B encodes the enzyme primarily responsible for sterol 14-alpha-demethylation, and plays an essential role in ascospore formation. CYP51A encodes an additional sterol 14-alpha-demethylase, induced on ergosterol depletion and responsible for the intrinsic variation in azole sensitivity. The third CYP51 isoform, CYP51C, does not encode a sterol 14-alpha-demethylase, but is required for full virulence on host wheat ears. The C-14 reductase ERG24 then reduces the C14=C15 double bond which leads to 4,4-dimethylfecosterol. A sequence of further demethylations at C-4, involving the C-4 demethylation complex containing the C-4 methylsterol oxidases ERG25, the sterol-4-alpha-carboxylate 3-dehydrogenase ERG26 and the 3-keto-steroid reductase ERG27, leads to the production of fecosterol via 4-methylfecosterol. ERG28 has a role as a scaffold to help anchor ERG25, ERG26 and ERG27 to the endoplasmic reticulum. The C-8 sterol isomerase ERG2 then catalyzes the reaction which results in unsaturation at C-7 in the B ring of sterols and thus converts fecosterol to episterol. The sterol-C5-desaturases ERG3A and ERG3BB then catalyze the introduction of a C-5 double bond in the B ring to produce 5-dehydroepisterol. The C-22 sterol desaturases ERG5A and ERG5B further convert 5-dehydroepisterol into ergosta-5,7,22,24(28)-tetraen-3beta-ol by forming the C-22(23) double bond in the sterol side chain. Finally, ergosta-5,7,22,24(28)-tetraen-3beta-ol is substrate of the C-24(28) sterol reductase ERG4 to produce ergosterol. The polypeptide is Delta(7)-sterol 5(6)-desaturase ERG3A (Gibberella zeae (strain ATCC MYA-4620 / CBS 123657 / FGSC 9075 / NRRL 31084 / PH-1) (Wheat head blight fungus)).